A 552-amino-acid chain; its full sequence is HTH-type transcriptional regulator SgrR (552 aa).

Residues 163 to 493 (ELKPDLAHHW…DDLDTDAQQW (331 aa)) form a solute-binding region.

Functionally, activates the small RNA gene sgrS under glucose-phosphate stress conditions as well as yfdZ. Represses its own transcription under both stress and non-stress conditions. Might act as a sensor of the intracellular accumulation of phosphoglucose by binding these molecules in its C-terminal solute-binding domain. The sequence is that of HTH-type transcriptional regulator SgrR from Pectobacterium atrosepticum (strain SCRI 1043 / ATCC BAA-672) (Erwinia carotovora subsp. atroseptica).